The following is a 184-amino-acid chain: Large ribosomal subunit protein uL5 (184 aa).

This sequence belongs to the universal ribosomal protein uL5 family. As to quaternary structure, part of the 50S ribosomal subunit; part of the 5S rRNA/L5/L18/L25 subcomplex. Contacts the 5S rRNA and the P site tRNA. Forms a bridge to the 30S subunit in the 70S ribosome.

Its function is as follows. This is one of the proteins that bind and probably mediate the attachment of the 5S RNA into the large ribosomal subunit, where it forms part of the central protuberance. In the 70S ribosome it contacts protein S13 of the 30S subunit (bridge B1b), connecting the 2 subunits; this bridge is implicated in subunit movement. Contacts the P site tRNA; the 5S rRNA and some of its associated proteins might help stabilize positioning of ribosome-bound tRNAs. The protein is Large ribosomal subunit protein uL5 of Fervidobacterium nodosum (strain ATCC 35602 / DSM 5306 / Rt17-B1).